A 106-amino-acid chain; its full sequence is UPF0145 protein CLH_2273 (106 aa).

This sequence belongs to the UPF0145 family.

The chain is UPF0145 protein CLH_2273 from Clostridium botulinum (strain Alaska E43 / Type E3).